The chain runs to 559 residues: Poly [ADP-ribose] polymerase 2 (559 aa).

The tract at residues 1-58 is disordered; sequence MAPRRQRSGSGRRVLNEAKKVDNGNKATEDDSPPGKKMRTCQRKGPMAGGKDADRTKD. Residues 1-83 are N-terminal region (NTR); it reads MAPRRQRSGS…VDPECAAKLG (83 aa). Positions 14–29 are enriched in basic and acidic residues; that stretch reads VLNEAKKVDNGNKATE. 2 consecutive short sequence motifs (nuclear localization signal) follow at residues 19–20 and 33–39; these read KK and PPGKKMR. Lysine 36 and lysine 37 each carry N6-(ADP-ribosyl)lysine; alternate. Residues lysine 36 and lysine 37 each carry the N6-acetyllysine; alternate modification. Residues 84 to 181 form the WGR domain; it reads KAHVYCEGDD…ENFEKVPGKY (98 aa). The region spanning 207–324 is the PARP alpha-helical domain; it reads ESQLDLRVQE…DIEIALKLVK (118 aa). At serine 208 the chain carries Phosphoserine. A PARP catalytic domain is found at 332–559; the sequence is HPLDQHYRNL…KIQFNFLQLW (228 aa). Residues 404 to 406, glycine 413, arginine 420, and serine 446 contribute to the NAD(+) site; that span reads HGS. The For poly [ADP-ribose] polymerase activity role is filled by glutamate 534.

Belongs to the ARTD/PARP family. In terms of assembly, component of a base excision repair (BER) complex, containing at least XRCC1, PARP1, POLB and LRIG3. Homo- and heterodimer with PARP1. Interacts (via the PARP catalytic domain) with HPF1. Interacts with core nucleosomes. Post-translationally, auto poly-ADP-ribosylated on serine residues, leading to dissociation of the PARP2-HPF1 complex from chromatin. Poly-ADP-ribosylated by PARP1. In terms of processing, acetylation reduces DNA binding and enzymatic activity. Proteolytically cleaved by caspase-8 (CASP8) in response to apoptosis, leading to its inactivation. Widely expressed; the highest levels were in testis followed by ovary. Expression is correlated with proliferation, with higher levels occurring during early fetal development and organogenesis and in the highly proliferative cell compartments of adult.

It localises to the nucleus. The protein localises to the chromosome. It catalyses the reaction NAD(+) + (ADP-D-ribosyl)n-acceptor = nicotinamide + (ADP-D-ribosyl)n+1-acceptor + H(+).. It carries out the reaction L-seryl-[protein] + NAD(+) = O-(ADP-D-ribosyl)-L-seryl-[protein] + nicotinamide + H(+). The catalysed reaction is L-aspartyl-[protein] + NAD(+) = 4-O-(ADP-D-ribosyl)-L-aspartyl-[protein] + nicotinamide. The enzyme catalyses L-glutamyl-[protein] + NAD(+) = 5-O-(ADP-D-ribosyl)-L-glutamyl-[protein] + nicotinamide. With respect to regulation, ADP-ribosyltransferase activity is regulated via an allosteric activation mechanism. In absence of activation signal, PARP2 is autoinhibited by the PARP alpha-helical domain (also named HD region), which prevents effective NAD(+)-binding. Activity is highly stimulated by signals, which unfold the PARP alpha-helical domain, relieving autoinhibition. Poly-ADP-ribosyltransferase activity is tightly regulated and PARP2 is removed from damaged chromatin following initial poly-ADP-ribosylation of chromatin to avoid prolonged residence (trapping) that has cytotoxic consequences. CHD1L promotes PARP2 removal from chromatin. Poly-ADP-ribosyltransferase that mediates poly-ADP-ribosylation of proteins and plays a key role in DNA repair. Mediates glutamate, aspartate or serine ADP-ribosylation of proteins: the ADP-D-ribosyl group of NAD(+) is transferred to the acceptor carboxyl group of target residues and further ADP-ribosyl groups are transferred to the 2'-position of the terminal adenosine moiety, building up a polymer with an average chain length of 20-30 units. Serine ADP-ribosylation of proteins constitutes the primary form of ADP-ribosylation of proteins in response to DNA damage. Mediates glutamate and aspartate ADP-ribosylation of target proteins in absence of HPF1. Following interaction with HPF1, catalyzes serine ADP-ribosylation of target proteins; HPF1 conferring serine specificity by completing the PARP2 active site. PARP2 initiates the repair of double-strand DNA breaks: recognizes and binds DNA breaks within chromatin and recruits HPF1, licensing serine ADP-ribosylation of target proteins, such as histones, thereby promoting decompaction of chromatin and the recruitment of repair factors leading to the reparation of DNA strand breaks. HPF1 initiates serine ADP-ribosylation but restricts the polymerase activity of PARP2 in order to limit the length of poly-ADP-ribose chains. Specifically mediates formation of branched poly-ADP-ribosylation. Branched poly-ADP-ribose chains are specifically recognized by some factors, such as APLF. In addition to proteins, also able to ADP-ribosylate DNA: preferentially acts on 5'-terminal phosphates at DNA strand breaks termini in nicked duplex. The chain is Poly [ADP-ribose] polymerase 2 (Parp2) from Mus musculus (Mouse).